Consider the following 117-residue polypeptide: Putative iron-sulfur cluster insertion protein ErpA (117 aa).

The iron-sulfur cluster site is built by C45, C109, and C111.

Belongs to the HesB/IscA family. As to quaternary structure, homodimer. The cofactor is iron-sulfur cluster.

Required for insertion of 4Fe-4S clusters. The chain is Putative iron-sulfur cluster insertion protein ErpA from Methylobacillus flagellatus (strain ATCC 51484 / DSM 6875 / VKM B-1610 / KT).